Reading from the N-terminus, the 280-residue chain is Soluble inorganic pyrophosphatase 1, chloroplastic (280 aa).

Diphosphate is bound at residue R120. Positions 152, 157, and 189 each coordinate Mg(2+).

As to quaternary structure, monomer. The cofactor is Mg(2+). Post-translationally, the N-terminus is blocked.

The protein resides in the plastid. It localises to the chloroplast. It catalyses the reaction diphosphate + H2O = 2 phosphate + H(+). This is Soluble inorganic pyrophosphatase 1, chloroplastic (ppa1) from Chlamydomonas reinhardtii (Chlamydomonas smithii).